The chain runs to 100 residues: Urease subunit gamma 2 (100 aa).

The protein belongs to the urease gamma subunit family. As to quaternary structure, heterotrimer of UreA (gamma), UreB (beta) and UreC (alpha) subunits. Three heterotrimers associate to form the active enzyme.

It localises to the cytoplasm. The enzyme catalyses urea + 2 H2O + H(+) = hydrogencarbonate + 2 NH4(+). It functions in the pathway nitrogen metabolism; urea degradation; CO(2) and NH(3) from urea (urease route): step 1/1. This Psychrobacter cryohalolentis (strain ATCC BAA-1226 / DSM 17306 / VKM B-2378 / K5) protein is Urease subunit gamma 2.